Reading from the N-terminus, the 494-residue chain is MALGGAFSIFMTLCLSCLLILIAWKRTSRGGKLPPGPTPIPFLGNLLQVRIDATFQSFLKLQKKYGSVFTVYFGPRPVVILCGHEAVKEALVDQADDFSGRGEMPTLEKNFQGYGLALSNGERWKILRRFSLTVLRNFGMGKRSIEERIQEEAGYLLEELHKVKGAPIDPTFYLSRTVSNVICSVVFGKRFDYEDQRFRSLMKMINESFVEMSMPWAQLYDMYWGVIQYFPGRHNRLYNLIEELKDFIASRVKINEASFDPSNPRDFIDCFLIKMYQDKSDPHSEFNLKNLVLTTLNLFFAGTETVSSTLRYGFLLLMKYPEVEAKIHEEINQVIGTHRTPRVDDRAKMPYTDAVIHEIQRLTDIVPLGVPHNVIRDTHFRGYFLPKGTDVYPLIGSVLKDPKYFRYPEAFYPQHFLDEQGRFKKNDAFVAFSSGKRICVGEALARMELFLYFTSILQRFSLRSLVPPADIDIAHKISGFGNIPPTYELCFMAR.

C439 is a heme binding site.

The protein belongs to the cytochrome P450 family. The cofactor is heme. As to expression, olfactory epithelium.

It is found in the endoplasmic reticulum membrane. It localises to the microsome membrane. It catalyses the reaction an organic molecule + reduced [NADPH--hemoprotein reductase] + O2 = an alcohol + oxidized [NADPH--hemoprotein reductase] + H2O + H(+). Functionally, cytochromes P450 are a group of heme-thiolate monooxygenases. This isozyme seems to be implicated in olfaction. The protein is Cytochrome P450 2G1 (Cyp2g1) of Rattus norvegicus (Rat).